The chain runs to 649 residues: MQCLGAEHLDSAERIPTQRQWRPQIYRKCTDTAWLFLFFLFWTGLVFIMGYSVAAGATGRLLFGYDSFGNVCGKKNSPVEGAPLSGQDMTQKKHVFFMNSCNLEVKDVRLSSTVLCVSSCPEEQLDTLEEVQLFANTSGSFLCVYNLNSFNYTQIPNADLLCPRLPVPPSKSFPLFNRCIPQTPECYSLFASVLINDVDSLHRILSGIMSGRDTVLGLCILAFALSLAMMFTFRFITTLLVHIFIALIVLGLLFVCSVLWWLYYDYTNDLSIELDTERENMKCLLGFAIVSTVITAVLLILIYVLRKRIKLTVELLQVTNKAISSSPFLLFQPLWTFAILIFFWVLWVAVLLSLGTAGAAQVVEGGQVEYKPLSGIRYMWWYHLIGLIWTSEFILACQQMAVAGTVVTCYFNRNKSDPPDRPILSSLSILFCYHQGTVVKGSFLITVVRIPRAVLMYVYNTLKEKDGALSRCVSQCCCCCFWCLDKCLRHLNQNAYTTTAINGTDFCTSAKDALKLLSKNSSHFTSVNCFGDFIIFLGKVLVVCFTVFGGLMAFNYHRVLQVWAVPLLLVAFFAYLVAHSFLSVFETVLDALFLCFAVDLETNDGSSEKPYFMDQEFLNFVKRINKLNTRAQRNKNSLTSEEGTELRPL.

Residues 33 to 53 form a helical membrane-spanning segment; the sequence is AWLFLFFLFWTGLVFIMGYSV. Residues asparagine 136 and asparagine 151 are each glycosylated (N-linked (GlcNAc...) asparagine). 5 consecutive transmembrane segments (helical) span residues 213–233, 235–255, 284–304, 334–354, and 384–404; these read DTVL…MFTF, FITT…LLFV, LLGF…LIYV, LWTF…LLSL, and LIGL…AVAG. Asparagine 414, asparagine 502, and asparagine 520 each carry an N-linked (GlcNAc...) asparagine glycan. Transmembrane regions (helical) follow at residues 533–553 and 562–582; these read FIIF…GLMA and VWAV…HSFL.

Belongs to the CTL (choline transporter-like) family.

It localises to the membrane. The sequence is that of Choline transporter-like protein 3 (SLC44A3) from Bos taurus (Bovine).